The sequence spans 192 residues: Peptidyl-tRNA hydrolase (192 aa).

The Proton acceptor role is filled by His19. TRNA contacts are provided by Tyr64, Asn66, and Asn112.

The protein belongs to the PTH family. As to quaternary structure, monomer.

The protein localises to the cytoplasm. The enzyme catalyses an N-acyl-L-alpha-aminoacyl-tRNA + H2O = an N-acyl-L-amino acid + a tRNA + H(+). In terms of biological role, hydrolyzes ribosome-free peptidyl-tRNAs (with 1 or more amino acids incorporated), which drop off the ribosome during protein synthesis, or as a result of ribosome stalling. Its function is as follows. Catalyzes the release of premature peptidyl moieties from peptidyl-tRNA molecules trapped in stalled 50S ribosomal subunits, and thus maintains levels of free tRNAs and 50S ribosomes. This is Peptidyl-tRNA hydrolase from Acidiphilium cryptum (strain JF-5).